A 124-amino-acid chain; its full sequence is Max-like protein 1 (124 aa).

Acidic residues predominate over residues 1–10; sequence MSDMSDLEDD. The disordered stretch occupies residues 1–44; the sequence is MSDMSDLEDDQTGHCGSGEHSGPFDPKRHAREQHNALERRRRDN. Residues 29 to 42 are basic motif; sequence HAREQHNALERRRR. A bHLH domain is found at 29–82; the sequence is HAREQHNALERRRRDNIKDMYTSLREVVPDANGERVQASRAVILKKAIESIEKG. Residues 32–44 show a composition bias toward basic and acidic residues; the sequence is EQHNALERRRRDN. A helix-loop-helix motif region spans residues 43–82; it reads DNIKDMYTSLREVVPDANGERVQASRAVILKKAIESIEKG. Residues 86-113 adopt a coiled-coil conformation; that stretch reads SATLSVDVAEQESKNAKLREEIARLKAK.

It belongs to the MAX family. Heterodimer with mdl-1 in presence and absence of DNA. Interacts with tdpt-1; the interaction promotes axon regeneration after injury. As to expression, expressed in D-type motor neurons.

It is found in the nucleus. Functionally, transcriptional regulator which binds to the E box motif 5'-CACGTG-3', when in a heterodimeric complex with mdl-1. Involved in the control of lifespan in response to dietary restriction, the decline in protein homeostasis associated with normal aging and may overlap with the insulin-like signaling pathway. Involved in promoting infection by the microsporidian pathogen N.parisii. Required for the expression of svh-2 and the promotion of axon regeneration after injury. In Caenorhabditis elegans, this protein is Max-like protein 1.